Here is a 294-residue protein sequence, read N- to C-terminus: Cytidine deaminase (294 aa).

CMP/dCMP-type deaminase domains follow at residues 48–168 and 186–294; these read DEDA…FGPK and LTGD…TLLA. 89–91 is a binding site for substrate; sequence NME. Residue H102 coordinates Zn(2+). E104 functions as the Proton donor in the catalytic mechanism. Positions 129 and 132 each coordinate Zn(2+).

Belongs to the cytidine and deoxycytidylate deaminase family. In terms of assembly, homodimer. Zn(2+) is required as a cofactor.

It carries out the reaction cytidine + H2O + H(+) = uridine + NH4(+). The enzyme catalyses 2'-deoxycytidine + H2O + H(+) = 2'-deoxyuridine + NH4(+). Its function is as follows. This enzyme scavenges exogenous and endogenous cytidine and 2'-deoxycytidine for UMP synthesis. The polypeptide is Cytidine deaminase (Enterobacter sp. (strain 638)).